The following is a 61-amino-acid chain: Type IV secretion system protein PtlI homolog (61 aa).

The first 25 residues, 1-25 (MIHAHSNARLLRWAILAIAPVTLGA), serve as a signal peptide directing secretion. The interval 37-61 (PDGKPLIPINTAAPEQGSSCQTRAP) is disordered. A compositionally biased stretch (polar residues) spans 52–61 (QGSSCQTRAP).

This Bordetella parapertussis (strain 12822 / ATCC BAA-587 / NCTC 13253) protein is Type IV secretion system protein PtlI homolog (ptlI).